The following is a 503-amino-acid chain: Probable cytochrome P450 6a19 (503 aa).

Residue C445 coordinates heme.

This sequence belongs to the cytochrome P450 family. Heme serves as cofactor.

Its subcellular location is the endoplasmic reticulum membrane. It is found in the microsome membrane. Functionally, may be involved in the metabolism of insect hormones and in the breakdown of synthetic insecticides. This is Probable cytochrome P450 6a19 (Cyp6a19) from Drosophila melanogaster (Fruit fly).